Consider the following 768-residue polypeptide: Ral guanine nucleotide dissociation stimulator-like 1 (768 aa).

An N-terminal Ras-GEF domain is found at 65-196; sequence KIRTIKAGTL…RAQNLLEQFQ (132 aa). One can recognise a Ras-GEF domain in the interval 232–501; that stretch reads SEDLVAEQLT…YALSCEIEAA (270 aa). Residue serine 520 is modified to Phosphoserine. Positions 528–623 are disordered; it reads MITSPTPTKE…PPSCNNNPKI (96 aa). 3 stretches are compositionally biased toward low complexity: residues 541–561, 586–596, and 605–621; these read STAS…SCES, ESSSSCSSIHS, and SSLI…NNNP. The 88-residue stretch at 648–735 folds into the Ras-associating domain; sequence DTCIIRISVE…FDFILRKKNS (88 aa).

In terms of assembly, interacts with Ras. In terms of tissue distribution, expressed in a wide variety of tissues with strong expression being seen in the heart, brain, kidney, spleen and testis.

In terms of biological role, probable guanine nucleotide exchange factor. This Homo sapiens (Human) protein is Ral guanine nucleotide dissociation stimulator-like 1 (RGL1).